The following is a 525-amino-acid chain: GMP synthase [glutamine-hydrolyzing] (525 aa).

In terms of domain architecture, Glutamine amidotransferase type-1 spans 9 to 207; the sequence is RILILDFGSQ…VMDICKCEKL (199 aa). Cys-86 (nucleophile) is an active-site residue. Active-site residues include His-181 and Glu-183. The GMPS ATP-PPase domain occupies 208-400; that stretch reads WTAGAIIEDA…LGLPYDMLYR (193 aa). 235–241 is an ATP binding site; that stretch reads SGGVDSS.

As to quaternary structure, homodimer.

It carries out the reaction XMP + L-glutamine + ATP + H2O = GMP + L-glutamate + AMP + diphosphate + 2 H(+). The protein operates within purine metabolism; GMP biosynthesis; GMP from XMP (L-Gln route): step 1/1. Catalyzes the synthesis of GMP from XMP. This chain is GMP synthase [glutamine-hydrolyzing], found in Alteromonas mediterranea (strain DSM 17117 / CIP 110805 / LMG 28347 / Deep ecotype).